Consider the following 114-residue polypeptide: UPF0102 protein Amet_2739 (114 aa).

Belongs to the UPF0102 family.

This chain is UPF0102 protein Amet_2739, found in Alkaliphilus metalliredigens (strain QYMF).